The following is a 451-amino-acid chain: Methylenetetrahydrofolate--tRNA-(uracil-5-)-methyltransferase TrmFO (451 aa).

10–15 serves as a coordination point for FAD; sequence GGGLAG.

The protein belongs to the MnmG family. TrmFO subfamily. FAD is required as a cofactor.

It is found in the cytoplasm. It catalyses the reaction uridine(54) in tRNA + (6R)-5,10-methylene-5,6,7,8-tetrahydrofolate + NADH + H(+) = 5-methyluridine(54) in tRNA + (6S)-5,6,7,8-tetrahydrofolate + NAD(+). The catalysed reaction is uridine(54) in tRNA + (6R)-5,10-methylene-5,6,7,8-tetrahydrofolate + NADPH + H(+) = 5-methyluridine(54) in tRNA + (6S)-5,6,7,8-tetrahydrofolate + NADP(+). Its function is as follows. Catalyzes the folate-dependent formation of 5-methyl-uridine at position 54 (M-5-U54) in all tRNAs. The chain is Methylenetetrahydrofolate--tRNA-(uracil-5-)-methyltransferase TrmFO from Anaeromyxobacter sp. (strain Fw109-5).